Reading from the N-terminus, the 127-residue chain is Small ribosomal subunit protein uS13 (127 aa).

The tract at residues Gly-100–Lys-127 is disordered. A compositionally biased stretch (basic residues) spans Gln-101–Lys-127.

Belongs to the universal ribosomal protein uS13 family. As to quaternary structure, part of the 30S ribosomal subunit. Forms a loose heterodimer with protein S19. Forms two bridges to the 50S subunit in the 70S ribosome.

In terms of biological role, located at the top of the head of the 30S subunit, it contacts several helices of the 16S rRNA. In the 70S ribosome it contacts the 23S rRNA (bridge B1a) and protein L5 of the 50S subunit (bridge B1b), connecting the 2 subunits; these bridges are implicated in subunit movement. Contacts the tRNAs in the A and P-sites. The chain is Small ribosomal subunit protein uS13 from Synechococcus sp. (strain JA-3-3Ab) (Cyanobacteria bacterium Yellowstone A-Prime).